The following is a 732-amino-acid chain: Protein kinase YpkA (732 aa).

Positions 136-408 constitute a Protein kinase domain; sequence VAETDKFAEG…SNEARLHEFL (273 aa). ATP-binding positions include 142-150 and Lys163; that span reads FAEGESHIS. The active-site Proton acceptor is Asp270.

Belongs to the protein kinase superfamily. Ser/Thr protein kinase family.

It localises to the secreted. The enzyme catalyses L-seryl-[protein] + ATP = O-phospho-L-seryl-[protein] + ADP + H(+). The catalysed reaction is L-threonyl-[protein] + ATP = O-phospho-L-threonyl-[protein] + ADP + H(+). In terms of biological role, acts as a virulence determinant. The sequence is that of Protein kinase YpkA (ypkA) from Yersinia pestis.